A 492-amino-acid chain; its full sequence is Homoserine O-acetyltransferase (492 aa).

Positions 47-354 (NVILVCHALT…NYGHDAFLLE (308 aa)) constitute an AB hydrolase-1 domain. The Nucleophile role is filled by Ser152. Arg221 provides a ligand contact to substrate. Active-site residues include Asp315 and His348. Asp349 provides a ligand contact to substrate. 2 CBS domains span residues 375–432 (MKLD…FTTL) and 436–492 (LTKN…HRCT).

The protein belongs to the AB hydrolase superfamily. MetX family. As to quaternary structure, homodimer.

The protein localises to the cytoplasm. The catalysed reaction is L-homoserine + acetyl-CoA = O-acetyl-L-homoserine + CoA. Its pathway is amino-acid biosynthesis; L-methionine biosynthesis via de novo pathway; O-acetyl-L-homoserine from L-homoserine: step 1/1. Transfers an acetyl group from acetyl-CoA to L-homoserine, forming acetyl-L-homoserine. This is Homoserine O-acetyltransferase from Methanosalsum zhilinae (strain DSM 4017 / NBRC 107636 / OCM 62 / WeN5) (Methanohalophilus zhilinae).